The sequence spans 557 residues: MRVAVFVLSFIWLVNGELLEADQDAVVPGDWTFLGRVGPLEEVELTFALKQQNVSKMEELLKLVSDPDSHQYGKYLSLDEVAALSRPSPLTEKVVENWLRSHGVMDCHTIITRDFLQCVMTVEVAEALLPGSKFHRFSKNTKTLLRSTSQYSVHEDVHQHLDFVGGVHRFPQKRKIVSKGWEGARQAILGYHLGVTPAVIRNRYNLTAKDVGTAANNSQAVAQFLEQYYHPADLAEFMSLFGGGFTHMSTVERVVGTQGGGKAGIEASLDVEYIMSSGANISTWVFTNPGRHESQEPFLQWMLLLSNMSAVPWVHTISYGDDEDSLSEAYMNRINIEFMKAGLRGISMLFASGDSGAGCRHLTKERNTFRPSFPASSPYVTTVGGTSFQNPFKLSYEVTDYISGGGFSNVFPMPDYQVDAVRAYLKSVQSLPPQTYFNTTGRAYPDLAALSDNYWVVSNRVPIPWVSGTSASTPVVGGILSLINDQRFLKGLPALGFINPRLYKMQGKGLYDVTVGCHLSCLDDKVEGKGFCASPSWDPVTGWGTPNYPVFLASLMD.

A signal peptide spans 1-16; the sequence is MRVAVFVLSFIWLVNG. The propeptide at 17–190 is removed in mature form; it reads ELLEADQDAV…WEGARQAILG (174 aa). The N-linked (GlcNAc...) asparagine glycan is linked to asparagine 53. Cysteines 107 and 118 form a disulfide. The Peptidase S53 domain occupies 194–557; it reads GVTPAVIRNR…YPVFLASLMD (364 aa). 2 N-linked (GlcNAc...) asparagine glycosylation sites follow: asparagine 205 and asparagine 216. Active-site charge relay system residues include glutamate 266 and aspartate 270. 3 N-linked (GlcNAc...) asparagine glycosylation sites follow: asparagine 280, asparagine 307, and asparagine 438. Disulfide bonds link cysteine 359-cysteine 521 and cysteine 517-cysteine 532. Serine 470 serves as the catalytic Charge relay system. Aspartate 512 and valine 513 together coordinate Ca(2+). A Ca(2+)-binding site is contributed by aspartate 538.

It depends on Ca(2+) as a cofactor. Activated by autocatalytic proteolytical processing.

Its subcellular location is the lysosome. The enzyme catalyses Release of an N-terminal tripeptide from a polypeptide, but also has endopeptidase activity.. Its function is as follows. Lysosomal serine protease with tripeptidyl-peptidase I activity. May act as a non-specific lysosomal peptidase which generates tripeptides from the breakdown products produced by lysosomal proteinases. Requires substrates with an unsubstituted N-terminus. This is Tripeptidyl-peptidase 1 from Danio rerio (Zebrafish).